We begin with the raw amino-acid sequence, 311 residues long: 4-diphosphocytidyl-2-C-methyl-D-erythritol kinase (311 aa).

K16 is a catalytic residue. 101-111 (PVAGGMAGGSA) serves as a coordination point for ATP. The active site involves D143.

Belongs to the GHMP kinase family. IspE subfamily.

The catalysed reaction is 4-CDP-2-C-methyl-D-erythritol + ATP = 4-CDP-2-C-methyl-D-erythritol 2-phosphate + ADP + H(+). It participates in isoprenoid biosynthesis; isopentenyl diphosphate biosynthesis via DXP pathway; isopentenyl diphosphate from 1-deoxy-D-xylulose 5-phosphate: step 3/6. In terms of biological role, catalyzes the phosphorylation of the position 2 hydroxy group of 4-diphosphocytidyl-2C-methyl-D-erythritol. The polypeptide is 4-diphosphocytidyl-2-C-methyl-D-erythritol kinase (Rhodococcus jostii (strain RHA1)).